Reading from the N-terminus, the 200-residue chain is Probable molybdenum cofactor guanylyltransferase (200 aa).

Residues 9-11, Lys-21, Asp-69, and Asp-100 each bind GTP; that span reads LAG. Position 100 (Asp-100) interacts with Mg(2+).

The protein belongs to the MobA family. The cofactor is Mg(2+).

The protein localises to the cytoplasm. The catalysed reaction is Mo-molybdopterin + GTP + H(+) = Mo-molybdopterin guanine dinucleotide + diphosphate. Its function is as follows. Transfers a GMP moiety from GTP to Mo-molybdopterin (Mo-MPT) cofactor (Moco or molybdenum cofactor) to form Mo-molybdopterin guanine dinucleotide (Mo-MGD) cofactor. In Bacillus cereus (strain ATCC 10987 / NRS 248), this protein is Probable molybdenum cofactor guanylyltransferase.